Reading from the N-terminus, the 118-residue chain is Large ribosomal subunit protein uL18 (118 aa).

It belongs to the universal ribosomal protein uL18 family. In terms of assembly, part of the 50S ribosomal subunit; part of the 5S rRNA/L5/L18/L25 subcomplex. Contacts the 5S and 23S rRNAs.

This is one of the proteins that bind and probably mediate the attachment of the 5S RNA into the large ribosomal subunit, where it forms part of the central protuberance. This chain is Large ribosomal subunit protein uL18, found in Lactobacillus acidophilus (strain ATCC 700396 / NCK56 / N2 / NCFM).